Reading from the N-terminus, the 119-residue chain is Albumin-1 (119 aa).

An N-terminal signal peptide occupies residues 1–19 (MAVFLLATSTIMFPTKIEA). Intrachain disulfides connect Cys22–Cys39, Cys26–Cys41, and Cys34–Cys51. Propeptides lie at residues 57–64 (LSSVAKMI) and 117–119 (TTK).

Post-translationally, the C-terminal glycine may be removed from A1b.

A1b binds to basic 7S globulin (BG) and stimulates its phosphorylation activity. Involved in the signal transduction system to regulate the growth and differentiation as a hormone peptide. In Glycine max (Soybean), this protein is Albumin-1.